A 544-amino-acid polypeptide reads, in one-letter code: Chaperonin GroEL 3 (544 aa).

Residues 30 to 33 (TLGP), Lys51, 87 to 91 (DGTTT), Gly415, and Asp496 each bind ATP.

The protein belongs to the chaperonin (HSP60) family. As to quaternary structure, forms a cylinder of 14 subunits composed of two heptameric rings stacked back-to-back. Interacts with the co-chaperonin GroES.

It is found in the cytoplasm. It catalyses the reaction ATP + H2O + a folded polypeptide = ADP + phosphate + an unfolded polypeptide.. In terms of biological role, together with its co-chaperonin GroES, plays an essential role in assisting protein folding. The GroEL-GroES system forms a nano-cage that allows encapsulation of the non-native substrate proteins and provides a physical environment optimized to promote and accelerate protein folding. This Rhizobium meliloti (strain 1021) (Ensifer meliloti) protein is Chaperonin GroEL 3.